Here is a 657-residue protein sequence, read N- to C-terminus: Tetracycline resistance protein TetQ (657 aa).

Positions 17-260 (MNIINLGILA…AISSFILPPE (244 aa)) constitute a tr-type G domain. Residues 26-33 (AHIDAGKT), 90-94 (DTPGH), and 144-147 (NKID) each bind GTP.

This sequence belongs to the TRAFAC class translation factor GTPase superfamily. Classic translation factor GTPase family. TetM/TetO subfamily.

Its function is as follows. Abolishes the inhibitory effect of tetracycline on protein synthesis by non-covalently modifying ribosomes. Confers mild resistance to tetracycline when expressed in E.coli. The polypeptide is Tetracycline resistance protein TetQ (tetQ) (Bacteroides fragilis).